A 79-amino-acid chain; its full sequence is Large ribosomal subunit protein uL24 (79 aa).

This sequence belongs to the universal ribosomal protein uL24 family. Part of the 50S ribosomal subunit.

One of two assembly initiator proteins, it binds directly to the 5'-end of the 23S rRNA, where it nucleates assembly of the 50S subunit. Functionally, one of the proteins that surrounds the polypeptide exit tunnel on the outside of the subunit. The chain is Large ribosomal subunit protein uL24 from Lactobacillus delbrueckii subsp. bulgaricus (strain ATCC 11842 / DSM 20081 / BCRC 10696 / JCM 1002 / NBRC 13953 / NCIMB 11778 / NCTC 12712 / WDCM 00102 / Lb 14).